A 380-amino-acid chain; its full sequence is Chaperone protein DnaJ (380 aa).

A J domain is found at 6–71; the sequence is DYYAILEVSR…QKRAAYDQYG (66 aa). The segment at 136–215 adopts a CR-type zinc-finger fold; it reads GVKKDVRVIT…CHGEGTVEKE (80 aa). Zn(2+)-binding residues include C149, C152, C167, C170, C189, C192, C203, and C206. CXXCXGXG motif repeat units follow at residues 149 to 156, 167 to 174, 189 to 196, and 203 to 210; these read CEACHGTG, CPSCHGAG, CPTCHGAG, and CKVCHGEG.

Belongs to the DnaJ family. Homodimer. The cofactor is Zn(2+).

It localises to the cytoplasm. Functionally, participates actively in the response to hyperosmotic and heat shock by preventing the aggregation of stress-denatured proteins and by disaggregating proteins, also in an autonomous, DnaK-independent fashion. Unfolded proteins bind initially to DnaJ; upon interaction with the DnaJ-bound protein, DnaK hydrolyzes its bound ATP, resulting in the formation of a stable complex. GrpE releases ADP from DnaK; ATP binding to DnaK triggers the release of the substrate protein, thus completing the reaction cycle. Several rounds of ATP-dependent interactions between DnaJ, DnaK and GrpE are required for fully efficient folding. Also involved, together with DnaK and GrpE, in the DNA replication of plasmids through activation of initiation proteins. The polypeptide is Chaperone protein DnaJ (Acetobacter pasteurianus (strain NBRC 105184 / IFO 3283-01)).